Reading from the N-terminus, the 105-residue chain is Thioredoxin (105 aa).

The Thioredoxin domain occupies 2-105 (VKQIESKYAF…KLEATINELI (104 aa)). The residue at position 3 (Lys3) is an N6-acetyllysine. Lys8 carries the post-translational modification N6-succinyllysine. Catalysis depends on nucleophile residues Cys32 and Cys35. Cys32 and Cys35 form a disulfide bridge. Lys39 bears the N6-acetyllysine mark. Cys62 and Cys69 each carry S-nitrosocysteine. Position 73 is an S-nitrosocysteine; alternate (Cys73). Lys94 is modified (N6-acetyllysine; alternate). Lys94 is subject to N6-succinyllysine; alternate.

Belongs to the thioredoxin family. In terms of assembly, homodimer; disulfide-linked. Interacts with TXNIP through the redox-active site. Interacts with MAP3K5 and CASP3. Interacts with APEX1; the interaction stimulates the FOS/JUN AP-1 DNA-binding activity in a redox-dependent manner. Post-translationally, in the fully reduced protein, both Cys-69 and Cys-73 are nitrosylated in response to nitric oxide (NO). When two disulfide bonds are present in the protein, only Cys-73 is nitrosylated. Cys-73 can serve as donor for nitrosylation of target proteins. As to expression, erythrocytes.

It is found in the nucleus. The protein localises to the cytoplasm. It localises to the secreted. In terms of biological role, participates in various redox reactions through the reversible oxidation of its active center dithiol to a disulfide and catalyzes dithiol-disulfide exchange reactions. Plays a role in the reversible S-nitrosylation of cysteine residues in target proteins, and thereby contributes to the response to intracellular nitric oxide. Nitrosylates the active site Cys of CASP3 in response to nitric oxide (NO), and thereby inhibits caspase-3 activity. Induces the FOS/JUN AP-1 DNA binding activity in ionizing radiation (IR) cells through its oxidation/reduction status and stimulates AP-1 transcriptional activity. This is Thioredoxin (TXN) from Sus scrofa (Pig).